The following is a 521-amino-acid chain: MDSCCNFSLGTKTVLAKDSFKNVENKFLGEKIKGSVLKPFSSDLSSKKFRNRKLRPGVAYAIATSKNAKEALKNQPSMFERRRADPKNVAAIILGGGDGAKLFPLTKRAATPAVPVGGCYRMIDIPMSNCINSCINKIFVLTQFNSASLNRHLARTYFGNGINFGDGFVEVLAATQTPGEAGKKWFQGTADAVRKFLWVFEDAKNRNIENIIILSGDHLYRMNYMDFVQHHVDSKADITLSCAPVDESRASEYGLVNIDRSGRVVHFSEKPTGIDLKSMQTDTTMHGLSHQEAAKSPYIASMGVYCFKTEALLKLLTWRYPSSNDFGSEIIPAAIKDHNVQGYIYRDYWEDIGTIKSFYEANIALVEEHPKFEFYDQNTPFYTSPRFLPPTKTEKCRIVNSVISHGCFLGECSIQRSIIGERSRLDYGVELQDTLMLGADSYQTESEIASLLAEGNVPIGIGRDTKIRKCIIDKNAKIGKNVVIMNKDDVKEADRPEEGFYIRSGITVVVEKATIKDGTVI.

A chloroplast-targeting transit peptide spans 1–61 (MDSCCNFSLG…RKLRPGVAYA (61 aa)).

It belongs to the bacterial/plant glucose-1-phosphate adenylyltransferase family. In terms of assembly, heterotetramer. In terms of tissue distribution, probably are expressed in roots, flowers and/or seeds.

It is found in the plastid. The protein resides in the chloroplast. The enzyme catalyses alpha-D-glucose 1-phosphate + ATP + H(+) = ADP-alpha-D-glucose + diphosphate. It functions in the pathway glycan biosynthesis; starch biosynthesis. With respect to regulation, activated by 3'phosphoglycerate, inhibited by orthophosphate. Allosteric regulation. Functionally, this protein plays a role in synthesis of starch. It catalyzes the synthesis of the activated glycosyl donor, ADP-glucose from Glc-1-P and ATP. This is Glucose-1-phosphate adenylyltransferase large subunit 3, chloroplastic (APL3) from Arabidopsis thaliana (Mouse-ear cress).